The chain runs to 449 residues: Exopolygalacturonase X-2 (449 aa).

Positions 1 to 24 (MGFKRTIGLLLGILLALDQVSVLA) are cleaved as a signal peptide. 3 N-linked (GlcNAc...) asparagine glycosylation sites follow: Asn-136, Asn-172, and Asn-208. Residues 240-261 (SDNVVIQNSVINHDDDCVSFKP) form a PbH1 1 repeat. The Proton donor role is filled by Asp-254. An intrachain disulfide couples Cys-256 to Cys-273. Asn-262 and Asn-274 each carry an N-linked (GlcNAc...) asparagine glycan. PbH1 repeat units lie at residues 263–283 (STNI…SVGS) and 294–315 (VSDL…RLKV). Residue His-277 is part of the active site. Asn-301, Asn-306, Asn-340, and Asn-365 each carry an N-linked (GlcNAc...) asparagine glycan. Cys-403 and Cys-409 form a disulfide bridge. Asn-416 and Asn-421 each carry an N-linked (GlcNAc...) asparagine glycan.

It belongs to the glycosyl hydrolase 28 family.

The protein localises to the secreted. The catalysed reaction is [(1-&gt;4)-alpha-D-galacturonosyl](n) + H2O = alpha-D-galacturonate + [(1-&gt;4)-alpha-D-galacturonosyl](n-1). In terms of biological role, specific in hydrolyzing the terminal glycosidic bond of polygalacturonic acid and oligogalacturonates. In Emericella nidulans (strain FGSC A4 / ATCC 38163 / CBS 112.46 / NRRL 194 / M139) (Aspergillus nidulans), this protein is Exopolygalacturonase X-2 (pgaX-2).